The following is a 149-amino-acid chain: Urease accessory protein UreE (149 aa).

It belongs to the UreE family.

It is found in the cytoplasm. Its function is as follows. Involved in urease metallocenter assembly. Binds nickel. Probably functions as a nickel donor during metallocenter assembly. The chain is Urease accessory protein UreE from Prochlorococcus marinus (strain MIT 9301).